The primary structure comprises 279 residues: F420-dependent methylenetetrahydromethanopterin dehydrogenase (279 aa).

This sequence belongs to the MTD family.

It carries out the reaction 5,10-methylenetetrahydromethanopterin + oxidized coenzyme F420-(gamma-L-Glu)(n) + 2 H(+) = 5,10-methenyl-5,6,7,8-tetrahydromethanopterin + reduced coenzyme F420-(gamma-L-Glu)(n). It functions in the pathway one-carbon metabolism; methanogenesis from CO(2); 5,10-methylene-5,6,7,8-tetrahydromethanopterin from 5,10-methenyl-5,6,7,8-tetrahydromethanopterin (coenzyme F420 route): step 1/1. Functionally, catalyzes the reversible reduction of methenyl-H(4)MPT(+) to methylene-H(4)MPT. In Methanosarcina mazei (strain ATCC BAA-159 / DSM 3647 / Goe1 / Go1 / JCM 11833 / OCM 88) (Methanosarcina frisia), this protein is F420-dependent methylenetetrahydromethanopterin dehydrogenase (mtd).